A 127-amino-acid polypeptide reads, in one-letter code: MFRTMMNGKIHRATVTEANLNYVGSITIDSAILEAVDMLPNEKVQIVNNNNGARIETYIIPGEPGSGVICLNGAAARHVQVGDVVIIMSYGMFTDEEAKTHEPKIVVLDEKNHIEMILPEEKAHTTL.

The active-site Schiff-base intermediate with substrate; via pyruvic acid is Ser25. Ser25 carries the pyruvic acid (Ser) modification. Thr57 lines the substrate pocket. Tyr58 acts as the Proton donor in catalysis. 73–75 (GAA) contacts substrate.

This sequence belongs to the PanD family. In terms of assembly, heterooctamer of four alpha and four beta subunits. Requires pyruvate as cofactor. Post-translationally, is synthesized initially as an inactive proenzyme, which is activated by self-cleavage at a specific serine bond to produce a beta-subunit with a hydroxyl group at its C-terminus and an alpha-subunit with a pyruvoyl group at its N-terminus.

It localises to the cytoplasm. The enzyme catalyses L-aspartate + H(+) = beta-alanine + CO2. The protein operates within cofactor biosynthesis; (R)-pantothenate biosynthesis; beta-alanine from L-aspartate: step 1/1. Catalyzes the pyruvoyl-dependent decarboxylation of aspartate to produce beta-alanine. The protein is Aspartate 1-decarboxylase of Listeria monocytogenes serovar 1/2a (strain ATCC BAA-679 / EGD-e).